We begin with the raw amino-acid sequence, 854 residues long: Probable inorganic carbon transporter subunit DabA (854 aa).

The Zn(2+) site is built by Cys378, Asp380, His560, and Cys575.

The protein belongs to the inorganic carbon transporter (TC 9.A.2) DabA family. As to quaternary structure, forms a complex with DabB. The cofactor is Zn(2+).

The protein resides in the cell membrane. Functionally, part of an energy-coupled inorganic carbon pump. The polypeptide is Probable inorganic carbon transporter subunit DabA (Bacillus cereus (strain ATCC 14579 / DSM 31 / CCUG 7414 / JCM 2152 / NBRC 15305 / NCIMB 9373 / NCTC 2599 / NRRL B-3711)).